A 160-amino-acid polypeptide reads, in one-letter code: GPI-anchored protein LLG3 (160 aa).

The N-terminal stretch at 1–23 is a signal peptide; the sequence is MKITHHCLVSLLSILLLSGFAFS. Residue asparagine 56 is glycosylated (N-linked (GlcNAc...) asparagine). The GPI-anchor amidated serine moiety is linked to residue serine 137. The propeptide at 138-160 is removed in mature form; it reads HASIPLVSTHVLLITVSILFHLF.

As to expression, expressed in pollen, pollen tubes, sporophytic pistil tissues, in the early stages of female gametophyte development, and in unfertilized, mature ovules.

Its subcellular location is the cell membrane. The chain is GPI-anchored protein LLG3 from Arabidopsis thaliana (Mouse-ear cress).